The primary structure comprises 131 residues: Profilin-8 (131 aa).

Cys-13 and Cys-115 are disulfide-bonded. The short motif at 81 to 97 (AVIRGKKGSGGITVKKT) is the Involved in PIP2 interaction element. The residue at position 111 (Thr-111) is a Phosphothreonine.

This sequence belongs to the profilin family. As to quaternary structure, occurs in many kinds of cells as a complex with monomeric actin in a 1:1 ratio. Phosphorylated by MAP kinases.

The protein localises to the cytoplasm. It localises to the cytoskeleton. In terms of biological role, binds to actin and affects the structure of the cytoskeleton. At high concentrations, profilin prevents the polymerization of actin, whereas it enhances it at low concentrations. This chain is Profilin-8, found in Zea mays (Maize).